The primary structure comprises 867 residues: Putative ubiquitin thioesterase L96 (867 aa).

4 disordered regions span residues 49–73, 177–204, 231–271, and 379–591; these read VNQYSTNPPSSSSESDDDEDMGKQD, IKSVSPSRSPSPRRSRSPSPNIQNMKKK, YILS…PKYR, and LSTQ…YKGG. Basic residues-rich tracts occupy residues 234–258 and 421–430; these read SRKKSPSPVRKSRSPSLRQRSRSPG and KITRKPKSPR. Composition is skewed to low complexity over residues 433 to 462 and 472 to 551; these read PPASVRRSRTPSVPKSPSARPRSKSPSVRA and PPSS…KSPS. The segment covering 565-575 has biased composition (polar residues); that stretch reads ITVDPSVTPPS. Over residues 582-591 the composition is skewed to basic and acidic residues; sequence RPELPEYKGG. The OTU domain occupies 606-745; it reads YKVIPVKGDG…DYHYTALTPL (140 aa). Residue Asp-614 is part of the active site. Cys-617 functions as the Nucleophile in the catalytic mechanism. The active site involves His-738.

It carries out the reaction Thiol-dependent hydrolysis of ester, thioester, amide, peptide and isopeptide bonds formed by the C-terminal Gly of ubiquitin (a 76-residue protein attached to proteins as an intracellular targeting signal).. Hydrolase that can remove conjugated ubiquitin from proteins and may therefore play an important regulatory role at the level of protein turnover by preventing degradation. May be involved in TIV genomic DNA packaging in a manner related to the Gag polyproteins of the mammalian viruses. The polypeptide is Putative ubiquitin thioesterase L96 (Tipula iridescent virus (TIV)).